The chain runs to 729 residues: Alpha-galactosidase AgaA (729 aa).

Residues Asp-53, Trp-199, 366 to 367 (DD), Arg-443, 476 to 480 (KWDMN), Cys-526, and Asp-548 contribute to the substrate site. Asp-478 functions as the Nucleophile in the catalytic mechanism. The active-site Proton donor is Asp-548.

Belongs to the glycosyl hydrolase 36 family. As to quaternary structure, homotetramer.

The catalysed reaction is Hydrolysis of terminal, non-reducing alpha-D-galactose residues in alpha-D-galactosides, including galactose oligosaccharides, galactomannans and galactolipids.. Not inhibited by D-galactose or sucrose. Inhibited by pharmaceutical drug 1-deoxygalactonojirimycin. Its function is as follows. Hydrolyzes the short-chain alpha-galactosaccharides raffinose and stachyose. This Geobacillus stearothermophilus (Bacillus stearothermophilus) protein is Alpha-galactosidase AgaA.